A 466-amino-acid chain; its full sequence is Endoglucanase E-5 (466 aa).

The N-terminal stretch at 1 to 36 is a signal peptide; sequence MAKSPAARKGXPPVAVAVTAALALLIALLSPGVAQA. The 103-residue stretch at 37–139 folds into the CBM2 domain; it reads AGLTATVTKE…TINGAPCDEG (103 aa). The segment at 129 to 166 is disordered; the sequence is CTINGAPCDEGSEPGGPGGPGTPSPDPGTQPGTGTPVE. Glu299 (proton donor) is an active-site residue. The Nucleophile role is filled by Glu391.

This sequence belongs to the glycosyl hydrolase 5 (cellulase A) family.

It carries out the reaction Endohydrolysis of (1-&gt;4)-beta-D-glucosidic linkages in cellulose, lichenin and cereal beta-D-glucans.. It participates in glycan metabolism; cellulose degradation. The chain is Endoglucanase E-5 (celE) from Thermobifida fusca (Thermomonospora fusca).